The sequence spans 199 residues: Recombination protein RecR (199 aa).

A C4-type zinc finger spans residues 57-72 (CERCNNLSEAPLCAVC). The region spanning 80–174 (SILCVVESPA…TISRIARGVP (95 aa)) is the Toprim domain.

This sequence belongs to the RecR family.

Functionally, may play a role in DNA repair. It seems to be involved in an RecBC-independent recombinational process of DNA repair. It may act with RecF and RecO. This is Recombination protein RecR from Acidithiobacillus ferrooxidans (strain ATCC 23270 / DSM 14882 / CIP 104768 / NCIMB 8455) (Ferrobacillus ferrooxidans (strain ATCC 23270)).